The primary structure comprises 756 residues: Multicystatin (756 aa).

8 consecutive Cystatin domains span residues 3 to 96 (IVGG…DDST), 97 to 191 (MPGG…DDIA), 192 to 285 (KLGG…DDSA), 286 to 380 (KTGG…DSAK), 381 to 474 (KLGG…DDSA), 475 to 568 (KLGG…DDSA), 569 to 662 (IIGG…DDSA), and 663 to 756 (KPGG…DATK). 8 consecutive short sequence motifs (secondary area of contact) follow at residues 48-52 (QIVAG), 142-146 (QVVAG), 237-241 (QVVAG), 331-335 (QLVSG), 426-430 (QVVAG), 520-524 (QLVAG), 614-618 (QLVAG), and 708-712 (QVVAG).

It belongs to the cystatin family. Phytocystatin subfamily. Expressed abundantly in tuber and leaf.

Probably has a role in the plant's defense system. This Solanum tuberosum (Potato) protein is Multicystatin.